The following is a 389-amino-acid chain: Putative F-box protein At3g10240 (389 aa).

The interval 1-26 (MEQQEEKRKIKAYQRKSKRSKSGSSS) is disordered. The span at 9–21 (KIKAYQRKSKRSK) shows a compositional bias: basic residues. The F-box domain occupies 21–66 (KSGSSSIPLDLVSEILLRLPEKSVARFRCVSKPWSSITTEPYFINL).

In Arabidopsis thaliana (Mouse-ear cress), this protein is Putative F-box protein At3g10240.